Reading from the N-terminus, the 156-residue chain is ADP-ribosylation factor-like protein 2-binding protein (156 aa).

Belongs to the ARL2BP family.

The protein localises to the cytoplasm. Its subcellular location is the mitochondrion intermembrane space. It localises to the cytoskeleton. The protein resides in the microtubule organizing center. It is found in the centrosome. The protein localises to the nucleus. Its subcellular location is the spindle. It localises to the cilium basal body. In terms of biological role, plays a role as an effector of the ADP-ribosylation factor-like protein 2, ARL2. The protein is ADP-ribosylation factor-like protein 2-binding protein (arl2bp) of Xenopus laevis (African clawed frog).